Reading from the N-terminus, the 34-residue chain is Leader peptide SpeFL (34 aa).

An Ornithine recognition loop motif is present at residues 10 to 16 (HIRRTTH). L-ornithine is bound at residue R13.

This sequence belongs to the speF operon leader peptide family. In terms of assembly, binds ornithine in stalled 70S ribosomes, blocking the upper two-thirds of the exit tunnel. Contacts 23S rRNA and ribosomal proteins L4 and L22.

In terms of biological role, a small protein (arrest peptide) encoded upstream of inducible ornithine carboxylase gene (speF) that controls expression of downstream genes (speF and potE) by transcriptional and translational attenuation. Its expression controls transcription and translation of downstream SpeF; translation pausing at low Arg levels on this mRNA prevents premature Rho-dependent transcription termination of speF and also enhances SprF translation by preventing sequestration of its ribosome-binding site. In the presence of high Arg levels translation of this protein allows the formation of an speF mRNA structure that is degraded by RNase G. The sequence is that of Leader peptide SpeFL from Salmonella typhimurium (strain SL1344).